Here is a 138-residue protein sequence, read N- to C-terminus: Cysteine desulfuration protein SufE (138 aa).

Cysteine 51 functions as the Cysteine persulfide intermediate in the catalytic mechanism.

This sequence belongs to the SufE family. Homodimer. Interacts with SufS.

The protein localises to the cytoplasm. Its pathway is cofactor biosynthesis; iron-sulfur cluster biosynthesis. Functionally, participates in cysteine desulfuration mediated by SufS. Cysteine desulfuration mobilizes sulfur from L-cysteine to yield L-alanine and constitutes an essential step in sulfur metabolism for biosynthesis of a variety of sulfur-containing biomolecules. Functions as a sulfur acceptor for SufS, by mediating the direct transfer of the sulfur atom from the S-sulfanylcysteine of SufS, an intermediate product of cysteine desulfuration process. This Escherichia coli O17:K52:H18 (strain UMN026 / ExPEC) protein is Cysteine desulfuration protein SufE.